The chain runs to 353 residues: N-terminal EF-hand calcium-binding protein 3 (353 aa).

The 36-residue stretch at Ala27–Ser62 folds into the EF-hand domain. 5 residues coordinate Ca(2+): Asp40, Asn42, Asp44, Lys46, and Glu51. The interval Ile172 to Ser181 is required for interaction with APBA3. Residues Ser193–Ser203 are compositionally biased toward low complexity. The tract at residues Ser193 to Gln213 is disordered. Residues Asp204–Gln213 show a composition bias toward polar residues. One can recognise an ABM domain in the interval Leu253 to Phe342.

As to quaternary structure, interacts with the N-terminal domain of APBA2. Interacts with NEK2. Interacts with APBA3; APBA3 seems to mediate the interaction between NECAB3 and HIF1AN. In terms of processing, phosphorylated by NEK2. As to expression, widely expressed, with highest levels in the brain.

It is found in the golgi apparatus. Its function is as follows. Inhibits the interaction of APBA2 with amyloid-beta precursor protein (APP), and hence allows formation of amyloid-beta. May enhance the activity of HIF1A and thus promote glycolysis under normoxic conditions; the function requires its ABM domain and may implicate the stabilization of the interaction between HIF1AN and APBA3. The chain is N-terminal EF-hand calcium-binding protein 3 (Necab3) from Mus musculus (Mouse).